Reading from the N-terminus, the 154-residue chain is Ribonuclease HI (154 aa).

The region spanning 1-142 (MQKQIEIFTD…CDQLAKAGAE (142 aa)) is the RNase H type-1 domain. Mg(2+)-binding residues include aspartate 10, glutamate 48, aspartate 70, and aspartate 134.

The protein belongs to the RNase H family. In terms of assembly, monomer. Mg(2+) serves as cofactor.

It is found in the cytoplasm. It carries out the reaction Endonucleolytic cleavage to 5'-phosphomonoester.. Functionally, endonuclease that specifically degrades the RNA of RNA-DNA hybrids. The sequence is that of Ribonuclease HI (rnhA) from Pasteurella multocida (strain Pm70).